A 1580-amino-acid chain; its full sequence is MGRRTYLSRSSTISYPSRIEGWLDVCETEGELTRLIKTLPWGPLYCVLQQDDQTFTAYCSEEISLGDVCYEDIPRVRLDRVRRPAKALWDGPPTLVEENEDSDSCVGGSGGMSGINDIVLNTTLYSELGEYKSKTLPRIHFDTALNDTSLNEDTSYEKACRRGSAPTTPILGSKQHQTEHNATSRFTNFFSKKSNPLKRTKSVTKLERTKRGSGGLRGSRSHESLLSSHAVMSTIDLSCTGAVGVAPVHQSVLGRRHCFQVRGGPRGERYYSCGSRQERDLWIYSLRKSIAPNAEHTRRTDNSLKMWVYEAKNLPPKKRYFCELQLDKTLYGRTSVKLQTDLLFWGEHFDFPDIPEINVITVNVFREVDKKKKRDKYQFVGSVKIPVHDVTSRLPCEQWYPILSDKAGDSLGRTSGGGGSGSKDKEQLPTLRIKCRFQSTDILPINVYGNFLTYLKENYKRVCETLEPVIGVKAKEDIGQALVLLMHAQGLAGAFLTDVVALDLLRVGDQRLTFRGNSLATKSMEAFLKLTGEQYLQDTLSAPINELIQSERDCEVDPTKTSGSSAGSLQRQQAALRGAVRGAWQCIFESHKHFPAQLRNCFATFRERLQQLGRQDMADNLISASIFLRFLCPAILSPSLFNITSELPSARATRNLTLVAKTLQTLANFTRFQGKENFMEFLNDFLEQEAARMQQFLEIISTRPEHPAPDSILDWAGYIDQGKQLSILHSLLSESLAKLPEARQHELDPLQHILDEISRAKEHGMGTALPGGYLPATSSTHSIASENQENRNPGSSGSHAGSNSEQLLPQQSQLAQPQHAIVSKPLSAERGIMRGVLTPNSLEKNIFRYNDPTVNGLLQQQQQQQQQQQQQQQQHQQLQQHGHQQQPHHQHPLQMLSNSQTSIAGNQYMSSPGGLQHAQSQTSMASSSLNGSSSNLLHGHQQHAHHPQQLHPHHCPPAPQTSASSTMERMDRMNYPYMSHNGNDYETSTPSSTRSRTLPRNGNPNANGNVGSSNNNQSGSYDDMHGEFQIQISGFDTSSAFVCKSPTPMMKSSLGPAGAGRSHHKLNLGIPDHSGGYVRGNNLNPNSNMPKNLEDLDDLFKYAEEHDVAEPANHHNHNQGQQNHQGHLKPAAVPGKEQLSAKSSHCSSGYQSISTNPSPSQSSSPVESQLKAAMGSHNAPLAFKNPSYQLQPQTGSSRSSAQSNTHQQQQQQQQQQFGSRLKPIGGGLVAARAAFLNSGGALEAATLTPSSSDEQLSADNYFSYAAAAAAGAGIATKLEAQRSLSGGSSSSTSASASTSNLGKSGGSSAYGRLNGPLKREDVYGSGYGGSSGNVGYGLSTSSAAGHHQHPHQQQQNPMQQQQQRERDQEHKQYAGSVAGSVGSATSAAQRRLSLDSARTLSDSSTDTEGHCNQLQEGKRRRQLRSSGGSGGGGAGSEQGLGKSYDQNGEIQLLQQTLDTLCHTLDRDEAELRDSSDELFGLQRPAGSNGSNNLSLQSESTMRSIIDRLITMEEELRREQLKMSLALSHKQRVIEEQGQQIAALDAANSRLLSALTALRQRYETQQQQQQHQAPPKTQKPQ.

Residue S164 is modified to Phosphoserine. Position 167 is a phosphothreonine (T167). Residues 197 to 223 are disordered; sequence LKRTKSVTKLERTKRGSGGLRGSRSHE. Phosphoserine occurs at positions 221 and 224. A PH domain is found at 233–291; the sequence is STIDLSCTGAVGVAPVHQSVLGRRHCFQVRGGPRGERYYSCGSRQERDLWIYSLRKSIA. The C2 domain maps to 282 to 400; that stretch reads WIYSLRKSIA…TSRLPCEQWY (119 aa). The Ras-GAP domain occupies 490 to 700; that stretch reads GLAGAFLTDV…ARMQQFLEII (211 aa). Disordered regions lie at residues 764 to 819, 857 to 892, 904 to 1023, 1112 to 1218, 1284 to 1313, 1334 to 1443, and 1561 to 1580; these read GMGT…QPQH, LLQQ…HQHP, AGNQ…SYDD, ANHH…QQFG, LSGG…YGRL, VGYG…LGKS, and YETQ…QKPQ. Residues 776-805 show a composition bias toward polar residues; sequence ATSSTHSIASENQENRNPGSSGSHAGSNSE. Low complexity-rich tracts occupy residues 806–818, 857–885, and 926–939; these read QLLP…AQPQ, LLQQ…GHQQ, and SSSL…LLHG. A compositionally biased stretch (basic residues) spans 940–954; the sequence is HQQHAHHPQQLHPHH. The span at 987 to 1020 shows a compositional bias: low complexity; sequence TSTPSSTRSRTLPRNGNPNANGNVGSSNNNQSGS. The segment covering 1140 to 1150 has biased composition (polar residues); that stretch reads SAKSSHCSSGY. The segment covering 1151 to 1169 has biased composition (low complexity); it reads QSISTNPSPSQSSSPVESQ. 2 positions are modified to phosphoserine: S1158 and S1164. Positions 1186–1206 are enriched in polar residues; it reads PSYQLQPQTGSSRSSAQSNTH. Composition is skewed to low complexity over residues 1207-1216, 1285-1299, and 1351-1362; these read QQQQQQQQQQ, SGGS…ASTS, and HQQQQNPMQQQQ. Basic and acidic residues predominate over residues 1363–1372; sequence QRERDQEHKQ. Over residues 1374–1388 the composition is skewed to low complexity; sequence AGSVAGSVGSATSAA. Positions 1396–1415 are enriched in polar residues; sequence SARTLSDSSTDTEGHCNQLQ. Phosphoserine occurs at positions 1401 and 1403. The segment covering 1427-1438 has biased composition (gly residues); that stretch reads GGSGGGGAGSEQ. Positions 1563–1580 are enriched in low complexity; it reads TQQQQQQHQAPPKTQKPQ.

The protein localises to the cytoplasm. Its subcellular location is the cell membrane. It localises to the apical cell membrane. GTPase-activating protein, which acts as a negative regulator for some members of the Ras family. Probably decreases their signaling activity by stimulating their intrinsic GTPase activity, thereby lowering the levels of the GTP-bound active form. Functions with DE-cadherin (shg) to promote embryonic border cell (BC) migration and adhesion by regulating the distribution of actin protrusions in BCs. Promotes shg-mediated adhesion at the BC interfaces and likely maintains BC cluster adhesion during BC detachment from the follicular epithelium and subsequent BC migration. Also required for restricting the development of actin-rich protrusions to the front of migrating BC clusters thus ensuring unidirectional BC migration. Possibly functions by suppressing Rac1 signaling in non-leading BCs, thus limiting its activity to leading BCs where it initiates localized actin cytoskeleton remodeling to produce the polarized protrusions. This chain is Ras GTPase-activating protein raskol, found in Drosophila melanogaster (Fruit fly).